Here is a 216-residue protein sequence, read N- to C-terminus: DNA replication complex GINS protein PSF3 (216 aa).

The not essential for folding and stability of GINS complex, but may regulate accessibility to the central complex pore stretch occupies residues methionine 1 to glutamate 16.

Belongs to the GINS3/PSF3 family. Component of the GINS complex which is a heterotetramer of GINS1, GINS2, GINS3 and GINS4. Forms a stable subcomplex with GINS2. GINS complex interacts with DNA primase in vitro. Component of the CMG helicase complex, a hexameric ring of related MCM2-7 subunits stabilized by CDC45 and the tetrameric GINS complex.

The protein resides in the nucleus. It is found in the chromosome. Required for correct functioning of the GINS complex, a complex that plays an essential role in the initiation of DNA replication, and progression of DNA replication forks. GINS complex is a core component of CDC45-MCM-GINS (CMG) helicase, the molecular machine that unwinds template DNA during replication, and around which the replisome is built. This Mus musculus (Mouse) protein is DNA replication complex GINS protein PSF3 (Gins3).